Here is a 607-residue protein sequence, read N- to C-terminus: UvrABC system protein C (607 aa).

One can recognise a GIY-YIG domain in the interval 29–106 (DKPGVYLMKD…IKKHNPKYNI (78 aa)). Residues 211–246 (GAILKALEKKMKEASENLEFERAKEYRDLMEDLKKV) form the UVR domain.

Belongs to the UvrC family. In terms of assembly, interacts with UvrB in an incision complex.

Its subcellular location is the cytoplasm. Functionally, the UvrABC repair system catalyzes the recognition and processing of DNA lesions. UvrC both incises the 5' and 3' sides of the lesion. The N-terminal half is responsible for the 3' incision and the C-terminal half is responsible for the 5' incision. This Desulfitobacterium hafniense (strain Y51) protein is UvrABC system protein C.